A 462-amino-acid polypeptide reads, in one-letter code: tRNA(Ile2) 2-agmatinylcytidine synthetase TiaS (462 aa).

This sequence belongs to the TiaS family.

It localises to the cytoplasm. It carries out the reaction cytidine(34) in tRNA(Ile2) + agmatine + ATP + H2O = 2-agmatinylcytidine(34) in tRNA(Ile2) + AMP + 2 phosphate + 2 H(+). Functionally, ATP-dependent agmatine transferase that catalyzes the formation of 2-agmatinylcytidine (agm2C) at the wobble position (C34) of tRNA(Ile2), converting the codon specificity from AUG to AUA. This is tRNA(Ile2) 2-agmatinylcytidine synthetase TiaS from Haloquadratum walsbyi (strain DSM 16790 / HBSQ001).